A 62-amino-acid polypeptide reads, in one-letter code: UPF0370 protein plu2724 (62 aa).

Residues 3–23 form a helical membrane-spanning segment; the sequence is WLADYWWIILILLVGVLLNAI. The interval 36–62 is disordered; sequence DNKPELPPHRDLNSKWDDEDDWPQKKP.

The protein belongs to the UPF0370 family.

It localises to the cell membrane. This is UPF0370 protein plu2724 from Photorhabdus laumondii subsp. laumondii (strain DSM 15139 / CIP 105565 / TT01) (Photorhabdus luminescens subsp. laumondii).